The chain runs to 92 residues: Small ribosomal subunit protein bS16 (92 aa).

It belongs to the bacterial ribosomal protein bS16 family.

The chain is Small ribosomal subunit protein bS16 from Staphylococcus carnosus (strain TM300).